The primary structure comprises 1727 residues: DNA-directed RNA polymerase II subunit rpb1 (1727 aa).

Cys-66, Cys-69, Cys-76, His-79, Cys-106, Cys-109, Cys-147, and Cys-175 together coordinate Zn(2+). Residues Asp-486, Asp-488, and Asp-490 each coordinate Mg(2+). The bridging helix stretch occupies residues 819–831 (PQEFFFHAMGGRE). Lys-1266 is covalently cross-linked (Glycyl lysine isopeptide (Lys-Gly) (interchain with G-Cter in ubiquitin)). Disordered regions lie at residues 1478-1512 (EPSN…YDAP) and 1551-1727 (PTYS…NKKK). Residues 1480 to 1505 (SNVSYPDTPGSQTPSYSYGDGSTTPF) are compositionally biased toward polar residues. 23 tandem repeats follow at residues 1553–1559 (YSPTSPS), 1560–1566 (YSPTSPS), 1567–1573 (YSPTSPS), 1574–1580 (YSPTSPS), 1581–1587 (YSPTSPS), 1588–1594 (YSPTSPS), 1595–1601 (YSPTSPF), 1602–1608 (YSPTSPS), 1609–1615 (YSPTSPS), 1616–1622 (YSPTSPS), 1623–1629 (YSPTSPS), 1630–1636 (YSPTSPS), 1637–1643 (YSPTSPS), 1644–1650 (YSPTSPS), 1651–1657 (YSPTSPS), 1658–1664 (YSPTSPS), 1665–1671 (YSPTSPS), 1672–1678 (YSPTSPS), 1679–1685 (YSPTSPS), 1686–1692 (YSPSSPS), 1693–1699 (YSPSSPS), 1700–1706 (YSPSSPS), and 1707–1713 (YSPSSPT). The tract at residues 1553–1713 (YSPTSPSYSP…SPSYSPSSPT (161 aa)) is C-terminal domain (CTD); 23 X 7 AA tandem repeats of Y-S-P-[ST]-S-P-[FST].

The protein belongs to the RNA polymerase beta' chain family. Component of the RNA polymerase II (Pol II) complex consisting of 12 subunits. In terms of processing, the tandem heptapeptide repeats in the C-terminal domain (CTD) can be highly phosphorylated. The phosphorylation activates Pol II. Phosphorylation occurs mainly at residues 'Ser-2' and 'Ser-5' of the heptapeptide repeat. The phosphorylation state is believed to result from the balanced action of site-specific CTD kinases and phosphatase, and a 'CTD code' that specifies the position of Pol II within the transcription cycle has been proposed. Following transcription stress, the elongating form of RNA polymerase II (RNA pol IIo) is polyubiquitinated via 'Lys-63'-linkages on Lys-1266 at DNA damage sites without leading to degradation: ubiquitination promotes RNA pol IIo backtracking to allow access by the transcription-coupled nucleotide excision repair (TC-NER) machinery. Subsequent DEF1-dependent polyubiquitination by the elongin complex via 'Lys-48'-linkages may lead to proteasome-mediated degradation; presumably at stalled RNA pol II where TC-NER has failed, to halt global transcription and enable 'last resort' DNA repair pathways.

The protein localises to the nucleus. The enzyme catalyses RNA(n) + a ribonucleoside 5'-triphosphate = RNA(n+1) + diphosphate. In terms of biological role, DNA-dependent RNA polymerase catalyzes the transcription of DNA into RNA using the four ribonucleoside triphosphates as substrates. Largest and catalytic component of RNA polymerase II which synthesizes mRNA precursors and many functional non-coding RNAs. Forms the polymerase active center together with the second largest subunit. Pol II is the central component of the basal RNA polymerase II transcription machinery. It is composed of mobile elements that move relative to each other. RPB1 is part of the core element with the central large cleft, the clamp element that moves to open and close the cleft and the jaws that are thought to grab the incoming DNA template. At the start of transcription, a single-stranded DNA template strand of the promoter is positioned within the central active site cleft of Pol II. A bridging helix emanates from RPB1 and crosses the cleft near the catalytic site and is thought to promote translocation of Pol II by acting as a ratchet that moves the RNA-DNA hybrid through the active site by switching from straight to bent conformations at each step of nucleotide addition. During transcription elongation, Pol II moves on the template as the transcript elongates. Elongation is influenced by the phosphorylation status of the C-terminal domain (CTD) of Pol II largest subunit (RPB1), which serves as a platform for assembly of factors that regulate transcription initiation, elongation, termination and mRNA processing. The protein is DNA-directed RNA polymerase II subunit rpb1 (polr2a) of Dictyostelium discoideum (Social amoeba).